The chain runs to 276 residues: Ribosomal RNA small subunit methyltransferase A (276 aa).

6 residues coordinate S-adenosyl-L-methionine: N27, L29, G54, E75, D101, and N122.

The protein belongs to the class I-like SAM-binding methyltransferase superfamily. rRNA adenine N(6)-methyltransferase family. RsmA subfamily.

It localises to the cytoplasm. It carries out the reaction adenosine(1518)/adenosine(1519) in 16S rRNA + 4 S-adenosyl-L-methionine = N(6)-dimethyladenosine(1518)/N(6)-dimethyladenosine(1519) in 16S rRNA + 4 S-adenosyl-L-homocysteine + 4 H(+). Functionally, specifically dimethylates two adjacent adenosines (A1518 and A1519) in the loop of a conserved hairpin near the 3'-end of 16S rRNA in the 30S particle. May play a critical role in biogenesis of 30S subunits. The chain is Ribosomal RNA small subunit methyltransferase A from Brucella abortus (strain S19).